Here is a 576-residue protein sequence, read N- to C-terminus: Arginine--tRNA ligase (576 aa).

The 'HIGH' region motif lies at 126 to 136; sequence ANPTGPMHIGH.

It belongs to the class-I aminoacyl-tRNA synthetase family. As to quaternary structure, monomer.

The protein localises to the cytoplasm. It carries out the reaction tRNA(Arg) + L-arginine + ATP = L-arginyl-tRNA(Arg) + AMP + diphosphate. In Rickettsia prowazekii (strain Madrid E), this protein is Arginine--tRNA ligase (argS).